A 378-amino-acid polypeptide reads, in one-letter code: Protein RecA (378 aa).

The interval 1-20 is disordered; it reads MAAKKDKSVPDSKITDKEGK. 80 to 87 is a binding site for ATP; sequence GAESSGKT. Positions 344–378 are disordered; that stretch reads GPVDKKKKKSKKEASSDDTDDENLEIDDAIDENND. The segment covering 359-378 has biased composition (acidic residues); the sequence is SDDTDDENLEIDDAIDENND.

Belongs to the RecA family.

The protein localises to the cytoplasm. Functionally, can catalyze the hydrolysis of ATP in the presence of single-stranded DNA, the ATP-dependent uptake of single-stranded DNA by duplex DNA, and the ATP-dependent hybridization of homologous single-stranded DNAs. It interacts with LexA causing its activation and leading to its autocatalytic cleavage. This Fusobacterium nucleatum subsp. nucleatum (strain ATCC 25586 / DSM 15643 / BCRC 10681 / CIP 101130 / JCM 8532 / KCTC 2640 / LMG 13131 / VPI 4355) protein is Protein RecA.